The chain runs to 351 residues: Ion-translocating oxidoreductase complex subunit D (351 aa).

4 helical membrane passes run 18-38, 40-60, 87-107, and 121-141; these read IMLL…YFFG, GSLI…GAVL, LPPL…IVIA, and PAMV…TSWL. T185 carries the post-translational modification FMN phosphoryl threonine. Helical transmembrane passes span 211–231, 241–261, 264–284, 298–318, and 320–340; these read VLAG…GLLL, IPVS…MIAP, FASP…FFIA, LIFG…GGYP, and GVAF…HYTQ.

The protein belongs to the NqrB/RnfD family. In terms of assembly, the complex is composed of six subunits: RnfA, RnfB, RnfC, RnfD, RnfE and RnfG. FMN is required as a cofactor.

It localises to the cell inner membrane. Part of a membrane-bound complex that couples electron transfer with translocation of ions across the membrane. This is Ion-translocating oxidoreductase complex subunit D from Yersinia pseudotuberculosis serotype O:1b (strain IP 31758).